Reading from the N-terminus, the 156-residue chain is Small ribosomal subunit protein uS7 (156 aa).

This sequence belongs to the universal ribosomal protein uS7 family. In terms of assembly, part of the 30S ribosomal subunit. Contacts proteins S9 and S11.

Functionally, one of the primary rRNA binding proteins, it binds directly to 16S rRNA where it nucleates assembly of the head domain of the 30S subunit. Is located at the subunit interface close to the decoding center, probably blocks exit of the E-site tRNA. In Staphylococcus aureus (strain bovine RF122 / ET3-1), this protein is Small ribosomal subunit protein uS7.